The sequence spans 470 residues: Probable E3 ubiquitin-protein ligase TRIML1 (470 aa).

The RING-type zinc-finger motif lies at 22-63 (CFICLDYFSSPVTTECGHSFCLMCLLKSWEEHNTPLSCPECW). Coiled coils occupy residues 135-170 (SEAEEQHKEKLQDIINILRKKKKEVQAILNHEKERV) and 196-235 (KEEEQLQLQLLEREEKANMKKLRENEIQLTQQIRRLGKMI). One can recognise a B30.2/SPRY domain in the interval 273–470 (TELSLCHITG…NTDPLIICHI (198 aa)).

As to quaternary structure, interacts with USP5. Testis.

It catalyses the reaction S-ubiquitinyl-[E2 ubiquitin-conjugating enzyme]-L-cysteine + [acceptor protein]-L-lysine = [E2 ubiquitin-conjugating enzyme]-L-cysteine + N(6)-ubiquitinyl-[acceptor protein]-L-lysine.. It participates in protein modification; protein ubiquitination. Functionally, probable E3 ubiquitin-protein ligase which plays an important role in blastocyst development. Involved in progression of blastocyst stage and subsequent embryo development. In Mus musculus (Mouse), this protein is Probable E3 ubiquitin-protein ligase TRIML1 (Triml1).